The following is a 297-amino-acid chain: Protein MIZU-KUSSEI 1 (297 aa).

In terms of tissue distribution, expressed in root meristematic region, cortical cells, lateral root cap cells, columella cells of the root cap, mature region of the roots and leaf hydathodes.

The protein resides in the endoplasmic reticulum membrane. Plays a role in lateral root development by maintaining auxin levels. This function requires GNOM (GN/MIZ2) activity. Negatively regulates cytokinin sensitivity on root development. Positively regulates hydrotropism in roots. The polypeptide is Protein MIZU-KUSSEI 1 (MIZ1) (Arabidopsis thaliana (Mouse-ear cress)).